Consider the following 324-residue polypeptide: GTPase Era (324 aa).

The Era-type G domain occupies 31–199 (KSGFIGIIGR…QELLVEHLEH (169 aa)). The interval 39–46 (GRPNVGKS) is G1. A GTP-binding site is contributed by 39–46 (GRPNVGKS). Residues 65–69 (QTTRN) form a G2 region. Positions 86–89 (DTPG) are G3. GTP contacts are provided by residues 86–90 (DTPGI) and 148–151 (NKVD). The tract at residues 148–151 (NKVD) is G4. Residues 178-180 (FSA) form a G5 region. Residues 230–306 (TREEVPHSVA…YLELFVKVQP (77 aa)) enclose the KH type-2 domain.

Belongs to the TRAFAC class TrmE-Era-EngA-EngB-Septin-like GTPase superfamily. Era GTPase family. As to quaternary structure, monomer.

Its subcellular location is the cytoplasm. It is found in the cell inner membrane. In terms of biological role, an essential GTPase that binds both GDP and GTP, with rapid nucleotide exchange. Plays a role in 16S rRNA processing and 30S ribosomal subunit biogenesis and possibly also in cell cycle regulation and energy metabolism. The chain is GTPase Era from Nostoc sp. (strain PCC 7120 / SAG 25.82 / UTEX 2576).